Reading from the N-terminus, the 898-residue chain is Serine/threonine-protein kinase PKH3 (898 aa).

Positions phenylalanine 11 to phenylalanine 293 constitute a Protein kinase domain. ATP contacts are provided by residues leucine 17–valine 25 and lysine 41. Catalysis depends on aspartate 138, which acts as the Proton acceptor. 2 disordered regions span residues proline 435 to glutamate 484 and aspartate 675 to serine 850. Residues proline 459–lysine 468 are compositionally biased toward polar residues. Residues leucine 469–threonine 483 show a composition bias toward low complexity. The residue at position 696 (serine 696) is a Phosphoserine. Positions isoleucine 697–asparagine 721 are enriched in polar residues. Positions glycine 723–proline 738 are enriched in basic and acidic residues. Composition is skewed to polar residues over residues alanine 740–glycine 758, serine 771–serine 782, and arginine 789–threonine 803. The residue at position 753 (serine 753) is a Phosphoserine. Low complexity predominate over residues serine 804–serine 817. The segment covering threonine 818–proline 831 has biased composition (polar residues). Serine 871 bears the Phosphoserine mark.

This sequence belongs to the protein kinase superfamily. Ser/Thr protein kinase family.

It carries out the reaction L-seryl-[protein] + ATP = O-phospho-L-seryl-[protein] + ADP + H(+). The enzyme catalyses L-threonyl-[protein] + ATP = O-phospho-L-threonyl-[protein] + ADP + H(+). In terms of biological role, serine/threonine-protein kinase which may phosphorylate the same targets substrates as PKH1 and PKH2, 2 upstream activators of PKC1. This chain is Serine/threonine-protein kinase PKH3 (PKH3), found in Saccharomyces cerevisiae (strain ATCC 204508 / S288c) (Baker's yeast).